A 146-amino-acid polypeptide reads, in one-letter code: Large-conductance mechanosensitive channel (146 aa).

The next 2 membrane-spanning stretches (helical) occupy residues 14–34 (VLDL…VNSL) and 81–101 (GLFL…FLLV).

Belongs to the MscL family. Homopentamer.

It is found in the cell membrane. Channel that opens in response to stretch forces in the membrane lipid bilayer. May participate in the regulation of osmotic pressure changes within the cell. The protein is Large-conductance mechanosensitive channel of Symbiobacterium thermophilum (strain DSM 24528 / JCM 14929 / IAM 14863 / T).